Consider the following 130-residue polypeptide: Small ribosomal subunit protein uS11 (130 aa).

Positions 111 to 130 (IRDVTPVPHNGSRPPKRRRA) are disordered.

This sequence belongs to the universal ribosomal protein uS11 family. In terms of assembly, part of the 30S ribosomal subunit. Interacts with proteins S7 and S18. Binds to IF-3.

In terms of biological role, located on the platform of the 30S subunit, it bridges several disparate RNA helices of the 16S rRNA. Forms part of the Shine-Dalgarno cleft in the 70S ribosome. The sequence is that of Small ribosomal subunit protein uS11 from Lactobacillus acidophilus (strain ATCC 700396 / NCK56 / N2 / NCFM).